The primary structure comprises 111 residues: Probable 4-amino-4-deoxy-L-arabinose-phosphoundecaprenol flippase subunit ArnE (111 aa).

Helical transmembrane passes span 36–56 (IVLW…LWLL), 61–81 (VPVG…TLAA), and 88–108 (PVSP…VILG). Residues 40-109 (LGLALACIGL…IIGGIVILGS (70 aa)) form the EamA domain.

The protein belongs to the ArnE family. As to quaternary structure, heterodimer of ArnE and ArnF.

The protein resides in the cell inner membrane. It participates in bacterial outer membrane biogenesis; lipopolysaccharide biosynthesis. In terms of biological role, translocates 4-amino-4-deoxy-L-arabinose-phosphoundecaprenol (alpha-L-Ara4N-phosphoundecaprenol) from the cytoplasmic to the periplasmic side of the inner membrane. The polypeptide is Probable 4-amino-4-deoxy-L-arabinose-phosphoundecaprenol flippase subunit ArnE (Shigella flexneri serotype 5b (strain 8401)).